Reading from the N-terminus, the 478-residue chain is Lipoprotein lipase (478 aa).

Residues 1–27 (MESKALLLVALSVWLQSLIVSREGLAT) form the signal peptide. The interval 35-56 (RDFTDIESKFALRTPEDTVEDT) is interaction with GPIHBP1. Cys57 and Cys70 form a disulfide bridge. The N-linked (GlcNAc...) asparagine glycan is linked to Asn73. At Tyr124 the chain carries 3'-nitrotyrosine. Ser162 serves as the catalytic Nucleophile. Residue Asp186 is the Charge relay system of the active site. Tyr194 is subject to 3'-nitrotyrosine. Residues Ala197, Arg200, Ser202, and Asp205 each contribute to the Ca(2+) site. A disulfide bridge connects residues Cys246 and Cys269. The essential for determining substrate specificity stretch occupies residues 246–269 (CNIGEAIRVIAERGLGDVDQLVKC). The Charge relay system role is filled by His271. 2 disulfides stabilise this stretch: Cys294/Cys313 and Cys305/Cys308. The 124-residue stretch at 344–467 (FHYQVKMRFS…KGKSSVVFVK (124 aa)) folds into the PLAT domain. 3'-nitrotyrosine is present on Tyr346. Residue Asn389 is glycosylated (N-linked (GlcNAc...) asparagine). Residues 420–424 (WSNWW) form an important for interaction with lipoprotein particles region. Residues 433–437 (KIRVK) form an important for heparin binding region. The segment at 446–470 (IFCSREKKSHLQKGKSSVVFVKCHD) is interaction with GPIHBP1. Cysteines 448 and 468 form a disulfide.

The protein belongs to the AB hydrolase superfamily. Lipase family. In terms of assembly, homodimer. Interacts with GPIHBP1 with 1:1 stoichiometry. Interacts with APOC2; the interaction activates LPL activity in the presence of lipids. Interaction with heparan sulfate proteoglycans is required to protect LPL against loss of activity. Associates with lipoprotein particles in blood plasma. Interacts with LMF1 and SEL1L; interaction with SEL1L is required to prevent aggregation of newly synthesized LPL in the endoplasmic reticulum (ER), and for normal export of LPL from the ER to the extracellular space. Interacts with SORL1; SORL1 acts as a sorting receptor, promoting LPL localization to endosomes and later to lysosomes, leading to degradation of newly synthesized LPL. Tyrosine nitration after lipopolysaccharide (LPS) challenge down-regulates the lipase activity.

It is found in the cell membrane. Its subcellular location is the secreted. The protein localises to the extracellular space. It localises to the extracellular matrix. The enzyme catalyses a triacylglycerol + H2O = a diacylglycerol + a fatty acid + H(+). It catalyses the reaction a 1,2-diacyl-sn-glycero-3-phosphocholine + H2O = a 2-acyl-sn-glycero-3-phosphocholine + a fatty acid + H(+). It carries out the reaction 1,2,3-tri-(9Z-octadecenoyl)-glycerol + H2O = di-(9Z)-octadecenoylglycerol + (9Z)-octadecenoate + H(+). The catalysed reaction is 1,2-di-(9Z-octadecenoyl)-sn-glycero-3-phosphocholine + H2O = (9Z-octadecenoyl)-sn-glycero-3-phosphocholine + (9Z)-octadecenoate + H(+). The enzyme catalyses 1,2,3-tributanoylglycerol + H2O = dibutanoylglycerol + butanoate + H(+). It catalyses the reaction 1,2-dihexadecanoyl-sn-glycero-3-phosphocholine + H2O = hexadecanoyl-sn-glycero-3-phosphocholine + hexadecanoate + H(+). Its activity is regulated as follows. The apolipoprotein APOC2 acts as a coactivator of LPL activity. Ca(2+) binding promotes protein stability and formation of the active homodimer. Interaction with GPIHBP1 protects LPL against inactivation by ANGPTL4. Its function is as follows. Key enzyme in triglyceride metabolism. Catalyzes the hydrolysis of triglycerides from circulating chylomicrons and very low density lipoproteins (VLDL), and thereby plays an important role in lipid clearance from the blood stream, lipid utilization and storage. Although it has both phospholipase and triglyceride lipase activities it is primarily a triglyceride lipase with low but detectable phospholipase activity. Mediates margination of triglyceride-rich lipoprotein particles in capillaries. Recruited to its site of action on the luminal surface of vascular endothelium by binding to GPIHBP1 and cell surface heparan sulfate proteoglycans. The sequence is that of Lipoprotein lipase (LPL) from Sus scrofa (Pig).